A 291-amino-acid polypeptide reads, in one-letter code: uncharacterized protein (291 aa).

In terms of domain architecture, HTH tetR-type spans 2–62; the sequence is KEKEKLIIET…SMLNYYYDKT (61 aa). The segment at residues 25–44 is a DNA-binding region (H-T-H motif); sequence SVQEIAKECKISKGAFYIYF.

This is an uncharacterized protein from Bacillus subtilis (strain 168).